The chain runs to 176 residues: Large ribosomal subunit protein uL10 (176 aa).

It belongs to the universal ribosomal protein uL10 family. As to quaternary structure, part of the ribosomal stalk of the 50S ribosomal subunit. The N-terminus interacts with L11 and the large rRNA to form the base of the stalk. The C-terminus forms an elongated spine to which L12 dimers bind in a sequential fashion forming a multimeric L10(L12)X complex.

Forms part of the ribosomal stalk, playing a central role in the interaction of the ribosome with GTP-bound translation factors. The polypeptide is Large ribosomal subunit protein uL10 (Thioalkalivibrio sulfidiphilus (strain HL-EbGR7)).